Consider the following 340-residue polypeptide: Alcohol dehydrogenase (340 aa).

Positions 40 and 63 each coordinate Zn(2+).

Belongs to the zinc-containing alcohol dehydrogenase family. Zn(2+) serves as cofactor.

It carries out the reaction a primary alcohol + NAD(+) = an aldehyde + NADH + H(+). The enzyme catalyses a secondary alcohol + NAD(+) = a ketone + NADH + H(+). The chain is Alcohol dehydrogenase (adhA) from Rhizobium meliloti (strain 1021) (Ensifer meliloti).